The sequence spans 225 residues: Cbp/p300-interacting transactivator 2 (225 aa).

Belongs to the CITED family.

Its subcellular location is the nucleus. In terms of biological role, transcriptional coactivator or corepressor of the p300/CBP-mediated transcription complex. May be involved in sex determination, early gonad development, left-right patterning during embryogenesis and differentiation of the adrenal cortex. The protein is Cbp/p300-interacting transactivator 2 (cited2) of Xenopus tropicalis (Western clawed frog).